The primary structure comprises 1039 residues: Pleckstrin homology domain-containing family G member 5 (1039 aa).

Disordered regions lie at residues 58–105 (NVST…RRHT) and 185–277 (PGDE…SSES). Basic and acidic residues-rich tracts occupy residues 185–199 (PGDE…KDSK) and 217–228 (ERVDPQSRRESS). A compositionally biased stretch (low complexity) spans 259-277 (SSCSLPVGSSVGSSGSSES). The DH domain occupies 372-564 (HQQEAVWELL…ERFIHHVNTC (193 aa)). The PH domain occupies 620–720 (QLLLEGSLRM…WVDTLYNAQN (101 aa)). 2 disordered regions span residues 739–785 (QHLQ…ASDG) and 800–836 (TLSS…LLPL). The segment covering 744–757 (LEEEEDEQEEEGEE) has biased composition (acidic residues). Polar residues-rich tracts occupy residues 758 to 776 (SGTS…SNSL) and 811 to 831 (FSSQ…TPTS). The residue at position 760 (Thr760) is a Phosphothreonine. Ser765 bears the Phosphoserine mark. Thr876 carries the phosphothreonine modification. A phosphoserine mark is found at Ser878, Ser903, and Ser908. The segment at 967 to 989 (PLSESENRPSHKAGGPADSARRK) is disordered.

Interacts with GIPC1/synectin and RHOA. As to expression, selectively expressed in cortical and hippocampal neurons with prominent expression in the cell bodies and dendrites. Weakly expressed in rat fad pad ECs (RFPECs).

Its subcellular location is the cytoplasm. It is found in the perinuclear region. The protein resides in the cell membrane. The protein localises to the cell junction. It localises to the cell projection. Its subcellular location is the lamellipodium. In terms of biological role, functions as a guanine exchange factor (GEF) for RAB26 and thus regulates autophagy of synaptic vesicles in axon terminal of motoneurons. Involved in the control of neuronal cell differentiation. Plays a role in angiogenesis through regulation of endothelial cells chemotaxis. Also affects the migration, adhesion, and matrix/bone degradation in macrophages and osteoclasts. In Rattus norvegicus (Rat), this protein is Pleckstrin homology domain-containing family G member 5 (Plekhg5).